Here is a 570-residue protein sequence, read N- to C-terminus: Pentatricopeptide repeat-containing protein At1g31430 (570 aa).

PPR repeat units lie at residues 10-44 (SLLM…GLYP), 45-79 (DNFT…GLEF), 80-110 (DSYV…MPQR), 111-141 (DVVS…MSQE), 147-177 (DEGT…VVTE), 181-215 (SVRI…NVKC), 216-242 (WTSM…SPVK), 243-277 (DVVL…GIRP), 278-312 (DNFV…RVTV), 313-343 (DKVV…IKER), 344-378 (DTAS…GVRL), 379-414 (DAIT…NVQP), and 415-449 (KSEH…SDET). Residues 453–528 (VYCSLLSAAR…FPGCSSIEID (76 aa)) are type E motif. The interval 529–561 (GVGHEFIVGDDLLSHPKMDEINSMLHQTTNLML) is type E(+) motif.

The protein belongs to the PPR family. PCMP-E subfamily.

In Arabidopsis thaliana (Mouse-ear cress), this protein is Pentatricopeptide repeat-containing protein At1g31430 (PCMP-E55).